The primary structure comprises 580 residues: Extracellular protease (580 aa).

Positions 1-32 (MSTASLRKRTGSLTILGASALTSLLLAMPAFA) are cleaved as a signal peptide. A propeptide spanning residues 33 to 136 (GEVYLDGLAT…VEVDQILHAT (104 aa)) is cleaved from the precursor. Residues 147-465 (QWAFGTTNAG…AGIVNADAAV (319 aa)) enclose the Peptidase S8 domain. Catalysis depends on charge relay system residues Asp177 and His237. 2 disulfide bridges follow: Cys225-Cys273 and Cys315-Cys352. Ser409 acts as the Charge relay system in catalysis. Cys450 and Cys454 are joined by a disulfide.

The protein belongs to the peptidase S8 family.

It is found in the secreted. In Xanthomonas campestris pv. campestris (strain ATCC 33913 / DSM 3586 / NCPPB 528 / LMG 568 / P 25), this protein is Extracellular protease.